A 1269-amino-acid chain; its full sequence is Regulator of nonsense transcripts 2 (1269 aa).

Disordered stretches follow at residues 1–125 and 143–162; these read MPAE…EKEE and LRSK…FFSR. Residues 57-133 adopt a coiled-coil conformation; it reads KKRLEEDKRK…EESLQLHQEA (77 aa). Residues 94 to 132 are sufficient for interaction with UPF1; the sequence is KKKQEEEERKKQEEQAKRQQEEAAAQLKEKEESLQLHQE. The MIF4G 1 domain maps to 168–396; it reads KKNTAFVKKL…KGELSEDRHK (229 aa). 2 disordered regions span residues 422-444 and 487-518; these read NMPD…DIFT and KSQN…DLEL. Composition is skewed to basic and acidic residues over residues 427 to 438 and 487 to 511; these read PQDKPTPEEHGP and KSQN…KEAS. MIF4G domains follow at residues 571–755 and 774–984; these read QQLP…YCNP and RKLL…LRPK. Residues 709 to 926 form a sufficient for interaction with UPF3A and UPF3B region; sequence GRFLFRSPES…IRLVCTILDT (218 aa). A sufficient for interaction with EIF4A1 and EIF1 region spans residues 755-1269; it reads PPPAEKTVRK…LIFKTGGRRR (515 aa). Residues 837–857 form a binds to UPF3B region; it reads EDVGIHVVDGVLEDIRLGMEV. The disordered stretch occupies residues 1017-1090; the sequence is SKDSMTEGEN…KENETDEENA (74 aa). Acidic residues predominate over residues 1025 to 1073; the sequence is ENLEEDEEEEEGGAETEEQSGNESEVNEPEEEEGSEEEEEGEEEEEENT. A sufficient for interaction with UPF1 C-terminus region spans residues 1081–1269; it reads KENETDEENA…LIFKTGGRRR (189 aa). A Phosphothreonine modification is found at Thr1085. Interaction with UPF1 regions lie at residues 1102–1126 and 1164–1204; these read VPCV…QQRS and DTMP…AEQE. The segment at 1102–1195 is necessary for interaction with UPF1; that stretch reads VPCVEDEDFI…PMSSQLAANH (94 aa). Positions 1218–1269 are disordered; that stretch reads ERQEQEDYQEMLQSLAQRPAPANTNRERRPRYQHPKGAPNADLIFKTGGRRR.

As to quaternary structure, found in a post-splicing messenger ribonucleoprotein (mRNP) complex. Associates with the exon junction complex (EJC). Interacts with SMG1, EST1A, UPF3A, UPF3B, EIF4A1 and EIF1. Interacts with UPF1; interaction is promoted by TDRD6. Interacts with DDX4. As to expression, localized in male germ cells.

Its subcellular location is the cytoplasm. The protein localises to the perinuclear region. In terms of biological role, involved in nonsense-mediated decay (NMD) of mRNAs containing premature stop codons by associating with the nuclear exon junction complex (EJC). Recruited by UPF3B associated with the EJC core at the cytoplasmic side of the nuclear envelope and the subsequent formation of an UPF1-UPF2-UPF3 surveillance complex (including UPF1 bound to release factors at the stalled ribosome) is believed to activate NMD. In cooperation with UPF3B stimulates both ATPase and RNA helicase activities of UPF1. Binds spliced mRNA. This Mus musculus (Mouse) protein is Regulator of nonsense transcripts 2.